A 739-amino-acid chain; its full sequence is UPF0313 protein YgiQ (739 aa).

The Radical SAM core domain maps to 372–650; it reads AYEMIRFSVN…KALLRYHDPA (279 aa). Residues C386, C390, and C393 each coordinate [4Fe-4S] cluster. The segment at 685 to 739 is disordered; sequence REARRQNRNTRPALTKHTPMATQRQTPATAKKASSTQSRPVNAGAKKRPKAAVGR. Positions 704 to 724 are enriched in polar residues; the sequence is MATQRQTPATAKKASSTQSRP. Over residues 729–739 the composition is skewed to basic residues; that stretch reads AKKRPKAAVGR.

This sequence belongs to the UPF0313 family. The cofactor is [4Fe-4S] cluster.

The sequence is that of UPF0313 protein YgiQ from Shigella flexneri.